Consider the following 274-residue polypeptide: S-adenosylmethionine-dependent nucleotide dehydratase (274 aa).

One can recognise a Radical SAM core domain in the interval 1 to 215 (MAYKVNLHIT…VERHAEVSHD (215 aa)). Positions 13, 17, and 20 each coordinate [4Fe-4S] cluster.

Belongs to the radical SAM superfamily. Prokaryotic viperin family. [4Fe-4S] cluster serves as cofactor.

It carries out the reaction CTP + AH2 + S-adenosyl-L-methionine = 3'-deoxy-3',4'-didehydro-CTP + 5'-deoxyadenosine + L-methionine + A + H2O + H(+). Expression of pVip6 in E.coli (strain MG1655) confers resistance to phages lambda, P1, SECphi6, SECphi8 and T7. Catalyzes the conversion of cytidine triphosphate (CTP) to 3'-deoxy-3',4'-didehydro-CTP (ddhCTP), probably via a SAM-dependent radical mechanism. The modified nucleotide represses transcription from T7 RNA polymerase-directed genes (possibly by acting as chain terminators), strongly suggesting these nucleotides block viral polymerase transcription. In Selenomonas ruminantium, this protein is S-adenosylmethionine-dependent nucleotide dehydratase.